We begin with the raw amino-acid sequence, 174 residues long: UPF0398 protein YfdB (174 aa).

This sequence belongs to the UPF0398 family.

The sequence is that of UPF0398 protein YfdB (yfdB) from Lactococcus lactis subsp. lactis (strain IL1403) (Streptococcus lactis).